The primary structure comprises 332 residues: Putative ankyrin repeat protein R896 (332 aa).

ANK repeat units follow at residues 159–188, 190–218, 219–248, 249–278, and 280–308; these read GNDN…NVKS, DNCA…NVKA, DGNY…DIKA, AQNL…NIST, and NDYV…DIFS.

In Acanthamoeba polyphaga mimivirus (APMV), this protein is Putative ankyrin repeat protein R896.